Consider the following 178-residue polypeptide: ATP synthase subunit delta (178 aa).

Belongs to the ATPase delta chain family. In terms of assembly, F-type ATPases have 2 components, F(1) - the catalytic core - and F(0) - the membrane proton channel. F(1) has five subunits: alpha(3), beta(3), gamma(1), delta(1), epsilon(1). F(0) has three main subunits: a(1), b(2) and c(10-14). The alpha and beta chains form an alternating ring which encloses part of the gamma chain. F(1) is attached to F(0) by a central stalk formed by the gamma and epsilon chains, while a peripheral stalk is formed by the delta and b chains.

It localises to the cell inner membrane. Its function is as follows. F(1)F(0) ATP synthase produces ATP from ADP in the presence of a proton or sodium gradient. F-type ATPases consist of two structural domains, F(1) containing the extramembraneous catalytic core and F(0) containing the membrane proton channel, linked together by a central stalk and a peripheral stalk. During catalysis, ATP synthesis in the catalytic domain of F(1) is coupled via a rotary mechanism of the central stalk subunits to proton translocation. This protein is part of the stalk that links CF(0) to CF(1). It either transmits conformational changes from CF(0) to CF(1) or is implicated in proton conduction. The chain is ATP synthase subunit delta from Azotobacter vinelandii (strain DJ / ATCC BAA-1303).